The primary structure comprises 376 residues: MMYSRFRTVAGNLNCAAKRLSSSSTTTTTTSAPSELQQNLAALRARLAMESPSLSDFISLKSDNAYSVEVGTKKKPLPKPKWMKESIPGGEKYVQIKKKLRELKLHTVCEEAKCPNLGECWSGGETGTATATIMILGDTCTRGCRFCNVKTSRTPPPPDPDEPTNVAEAIASWGLDYVVITSVDRDDLPDQGSGHFTETVQKLKALKPSTLIEALVPDFRGNAECVEKVSKSGLDVFAHNIETVEELQSAVRDHRANFKQSLDVLMMAKEYAPAGTLTKTSIMLGCGETPDQIVKTMEKVRAAGVDVMTFGQYMRPSKRHMPVSEYITPEAFEKYQTLGMEMGFRYVASGPMVRSSYKAGEFYIKSMIDSDRAASS.

7 residues coordinate [4Fe-4S] cluster: C109, C114, C120, C140, C144, C147, and S356. The 221-residue stretch at 125–345 folds into the Radical SAM core domain; it reads ETGTATATIM…QTLGMEMGFR (221 aa).

The protein belongs to the radical SAM superfamily. Lipoyl synthase family. [4Fe-4S] cluster serves as cofactor.

It localises to the mitochondrion. The catalysed reaction is [[Fe-S] cluster scaffold protein carrying a second [4Fe-4S](2+) cluster] + N(6)-octanoyl-L-lysyl-[protein] + 2 oxidized [2Fe-2S]-[ferredoxin] + 2 S-adenosyl-L-methionine + 4 H(+) = [[Fe-S] cluster scaffold protein] + N(6)-[(R)-dihydrolipoyl]-L-lysyl-[protein] + 4 Fe(3+) + 2 hydrogen sulfide + 2 5'-deoxyadenosine + 2 L-methionine + 2 reduced [2Fe-2S]-[ferredoxin]. The protein operates within protein modification; protein lipoylation via endogenous pathway; protein N(6)-(lipoyl)lysine from octanoyl-[acyl-carrier-protein]: step 2/2. Catalyzes the radical-mediated insertion of two sulfur atoms into the C-6 and C-8 positions of the octanoyl moiety bound to the lipoyl domains of lipoate-dependent enzymes, thereby converting the octanoylated domains into lipoylated derivatives. This chain is Lipoyl synthase 1, mitochondrial, found in Pisum sativum (Garden pea).